A 564-amino-acid polypeptide reads, in one-letter code: 4-hydroxybutyrate--CoA ligase 1 (564 aa).

Residues valine 105–proline 125 form a helical membrane-spanning segment. ATP-binding positions include threonine 204 to lysine 212, aspartate 343 to threonine 348, aspartate 429, and arginine 444. Threonine 348 lines the substrate pocket. Residue serine 452–tyrosine 454 participates in CoA binding. Arginine 455 lines the substrate pocket. CoA-binding positions include arginine 484, lysine 513, and valine 521–arginine 523. Lysine 538 contacts ATP.

Belongs to the ATP-dependent AMP-binding enzyme family. Mg(2+) serves as cofactor. Requires Mn(2+) as cofactor.

The protein resides in the membrane. It catalyses the reaction 4-hydroxybutanoate + ATP + CoA = 4-hydroxybutanoyl-CoA + AMP + diphosphate. The enzyme catalyses acetate + ATP + CoA = acetyl-CoA + AMP + diphosphate. The catalysed reaction is propanoate + ATP + CoA = propanoyl-CoA + AMP + diphosphate. It carries out the reaction a medium-chain fatty acid + ATP + CoA = a medium-chain fatty acyl-CoA + AMP + diphosphate. Its function is as follows. Involved in the 3-hydroxypropionate/4-hydroxybutyrate cycle which incorporates carbon dioxide into cellular carbon. Catalyzes the ligation of coenzyme A (CoA) to 4-hydroxybutyrate (4HB). It can also use butyrate, valerate, propionate, acetate and 3-hydroxybutyrate (3HB) as substrates. The chain is 4-hydroxybutyrate--CoA ligase 1 from Metallosphaera sedula (strain ATCC 51363 / DSM 5348 / JCM 9185 / NBRC 15509 / TH2).